Reading from the N-terminus, the 695-residue chain is Elongation factor G (695 aa).

The tr-type G domain maps to 8 to 282 (EKTRNIGIMA…AVLDYLPAPT (275 aa)). GTP-binding positions include 17-24 (AHIDAGKT), 81-85 (DTPGH), and 135-138 (NKMD).

It belongs to the TRAFAC class translation factor GTPase superfamily. Classic translation factor GTPase family. EF-G/EF-2 subfamily.

It localises to the cytoplasm. Catalyzes the GTP-dependent ribosomal translocation step during translation elongation. During this step, the ribosome changes from the pre-translocational (PRE) to the post-translocational (POST) state as the newly formed A-site-bound peptidyl-tRNA and P-site-bound deacylated tRNA move to the P and E sites, respectively. Catalyzes the coordinated movement of the two tRNA molecules, the mRNA and conformational changes in the ribosome. The protein is Elongation factor G of Listeria innocua serovar 6a (strain ATCC BAA-680 / CLIP 11262).